The following is a 164-amino-acid chain: ATP synthase subunit b (164 aa).

The helical transmembrane segment at 6–26 (GELVGNFILVTGSVIVLLLLI) threads the bilayer.

Belongs to the ATPase B chain family. F-type ATPases have 2 components, F(1) - the catalytic core - and F(0) - the membrane proton channel. F(1) has five subunits: alpha(3), beta(3), gamma(1), delta(1), epsilon(1). F(0) has three main subunits: a(1), b(2) and c(10-14). The alpha and beta chains form an alternating ring which encloses part of the gamma chain. F(1) is attached to F(0) by a central stalk formed by the gamma and epsilon chains, while a peripheral stalk is formed by the delta and b chains.

The protein localises to the cell membrane. F(1)F(0) ATP synthase produces ATP from ADP in the presence of a proton or sodium gradient. F-type ATPases consist of two structural domains, F(1) containing the extramembraneous catalytic core and F(0) containing the membrane proton channel, linked together by a central stalk and a peripheral stalk. During catalysis, ATP synthesis in the catalytic domain of F(1) is coupled via a rotary mechanism of the central stalk subunits to proton translocation. Functionally, component of the F(0) channel, it forms part of the peripheral stalk, linking F(1) to F(0). The polypeptide is ATP synthase subunit b (Streptococcus pyogenes serotype M1).